The following is a 167-amino-acid chain: Ubiquitin-fold modifier-conjugating enzyme 1 (167 aa).

Cys-116 acts as the Glycyl thioester intermediate in catalysis.

This sequence belongs to the ubiquitin-conjugating enzyme family. UFC1 subfamily. In terms of assembly, interacts with UBA5 (via C-terminus). Interacts with UFL1. Interacts with UFM1.

E2-like enzyme which specifically catalyzes the second step in ufmylation. Accepts the ubiquitin-like modifier UFM1 from the E1 enzyme UBA5 and forms an intermediate with UFM1 via a thioester linkage. Ufmylation is involved in various processes, such as ribosome recycling, response to DNA damage, interferon response or reticulophagy (also called ER-phagy). In Esox lucius (Northern pike), this protein is Ubiquitin-fold modifier-conjugating enzyme 1.